We begin with the raw amino-acid sequence, 241 residues long: Ribosomal RNA small subunit methyltransferase G (241 aa).

Residues glycine 96, phenylalanine 101, 119-121 (EAS), 147-148 (VE), and arginine 166 contribute to the S-adenosyl-L-methionine site.

Belongs to the methyltransferase superfamily. RNA methyltransferase RsmG family.

It is found in the cytoplasm. It catalyses the reaction guanosine(527) in 16S rRNA + S-adenosyl-L-methionine = N(7)-methylguanosine(527) in 16S rRNA + S-adenosyl-L-homocysteine. Its function is as follows. Specifically methylates the N7 position of guanine in position 527 of 16S rRNA. This is Ribosomal RNA small subunit methyltransferase G from Syntrophus aciditrophicus (strain SB).